We begin with the raw amino-acid sequence, 320 residues long: Methenyltetrahydromethanopterin cyclohydrolase (320 aa).

This sequence belongs to the MCH family.

The protein localises to the cytoplasm. The catalysed reaction is 5,10-methenyl-5,6,7,8-tetrahydromethanopterin + H2O = N(5)-formyl-5,6,7,8-tetrahydromethanopterin + H(+). In terms of biological role, catalyzes the hydrolysis of methenyl-H(4)MPT(+) to 5-formyl-H(4)MPT. This is Methenyltetrahydromethanopterin cyclohydrolase from Methanococcoides burtonii (strain DSM 6242 / NBRC 107633 / OCM 468 / ACE-M).